The sequence spans 219 residues: Putative ankyrin repeat protein BB_0399 (219 aa).

3 ANK repeats span residues 104–133, 137–166, and 170–199; these read YKISPISISIINNEFEITKILIDYGISLNQ, TGYSPIFWAIYTNNEKIFEFLKESGADLSF, and NRKTPMQAAIETENIKLIKSLEKKKIYIDD.

The polypeptide is Putative ankyrin repeat protein BB_0399 (Borreliella burgdorferi (strain ATCC 35210 / DSM 4680 / CIP 102532 / B31) (Borrelia burgdorferi)).